The primary structure comprises 543 residues: Sensor histidine kinase DcuS (543 aa).

Topologically, residues 1 to 20 (MRHSLPYRMLRKRPMKLSTT) are cytoplasmic. Residues 21–41 (VILMVSAVLFSVLLVVHLIYF) form a helical membrane-spanning segment. Topologically, residues 42–181 (SQISDMTRDG…VTQQINDSRW (140 aa)) are periplasmic. Residues 107 to 110 (RYSH), lysine 121, 140 to 142 (GFL), and arginine 147 each bind (R)-malate. The helical transmembrane segment at 182-202 (SIIWSVLFGMLVGLIGTCILV) threads the bilayer. The Cytoplasmic portion of the chain corresponds to 203-543 (NVLKKILFGL…IPWDGERSNR (341 aa)). One can recognise a PAS domain in the interval 212–323 (LEPYEISTLF…IIGAISTFRD (112 aa)). In terms of domain architecture, Histidine kinase spans 346–538 (ERSHEFMNKL…QFFVQIPWDG (193 aa)). Phosphohistidine; by autocatalysis is present on histidine 349.

As to quaternary structure, homodimer. Autophosphorylated. The phosphoryl group is rapidly transferred to DcuR.

The protein resides in the cell inner membrane. The enzyme catalyses ATP + protein L-histidine = ADP + protein N-phospho-L-histidine.. In terms of biological role, member of the two-component regulatory system DcuR/DcuS. Involved in the C4-dicarboxylate-stimulated regulation of the genes encoding the anaerobic fumarate respiratory system (frdABCD; nuoAN; dcuB; sdhCDAB; etc.). Weakly regulates the aerobic C4-dicarboxylate transporter dctA. Activates DcuR by phosphorylation. This is Sensor histidine kinase DcuS (dcuS) from Escherichia coli O6:H1 (strain CFT073 / ATCC 700928 / UPEC).